Here is a 347-residue protein sequence, read N- to C-terminus: MAKQTTLDEFNAVFPKLEEVLLDHARSYKLPQEQLDWYKKSLEANPLGGKCNRGMSVPDSVSLLLEKPLTEEQYFQAATLGWMTELLQAFFLVSDDIMDSSITRRGQPCWYRQEGVGMIAINDAFMLEMAIYTLLKKYFRTHPAYVDLIELFHETTFQTELGQLCDLLTAPEDNVNLDNFSLEKYSFIVIYKTAYYSFYLPVALALHQLNLATPSNLKQAEDILIPLGEYFQIQDDYLDNFGKPEHIGKIGTDIKDNKCSWLVNQALAVATPEQRKILEENYGRKDDAKELVVKKLYDDLKLEQLYLDYEEKVVGQIRERIANIDESGGLKKTVFEAFLAKIYKRSK.

Positions 50, 53, and 88 each coordinate isopentenyl diphosphate. The Mg(2+) site is built by Asp95 and Asp99. Residue Arg104 participates in dimethylallyl diphosphate binding. An isopentenyl diphosphate-binding site is contributed by Arg105. Positions 192, 193, 232, 249, and 258 each coordinate dimethylallyl diphosphate.

Belongs to the FPP/GGPP synthase family. The cofactor is Mg(2+).

The enzyme catalyses isopentenyl diphosphate + dimethylallyl diphosphate = (2E)-geranyl diphosphate + diphosphate. It carries out the reaction isopentenyl diphosphate + (2E)-geranyl diphosphate = (2E,6E)-farnesyl diphosphate + diphosphate. It participates in isoprenoid biosynthesis; farnesyl diphosphate biosynthesis; farnesyl diphosphate from geranyl diphosphate and isopentenyl diphosphate: step 1/1. The protein operates within isoprenoid biosynthesis; geranyl diphosphate biosynthesis; geranyl diphosphate from dimethylallyl diphosphate and isopentenyl diphosphate: step 1/1. Functionally, farnesyl pyrophosphate synthase; part of the second module of ergosterol biosynthesis pathway that includes the middle steps of the pathway. ERG20 catalyzes the sequential condensation of isopentenyl pyrophosphate with dimethylallyl pyrophosphate, and then with the resultant geranylpyrophosphate to the ultimate product farnesyl pyrophosphate. The second module is carried out in the vacuole and involves the formation of farnesyl diphosphate, which is also an important intermediate in the biosynthesis of ubiquinone, dolichol, heme and prenylated proteins. Activity by the mevalonate kinase ERG12 (FG05912) first converts mevalonate into 5-phosphomevalonate. 5-phosphomevalonate is then further converted to 5-diphosphomevalonate by the phosphomevalonate kinase ERG8 (FG09764). The diphosphomevalonate decarboxylase ERG19 (FG10424) then produces isopentenyl diphosphate. The isopentenyl-diphosphate delta-isomerase IDI1 (FG09722) then catalyzes the 1,3-allylic rearrangement of the homoallylic substrate isopentenyl (IPP) to its highly electrophilic allylic isomer, dimethylallyl diphosphate (DMAPP). Finally the farnesyl diphosphate synthase ERG20 (FG06784) catalyzes the sequential condensation of isopentenyl pyrophosphate with dimethylallyl pyrophosphate, and then with the resultant geranylpyrophosphate to the ultimate product farnesyl pyrophosphate. This is Farnesyl pyrophosphate synthase ERG20 from Gibberella zeae (strain ATCC MYA-4620 / CBS 123657 / FGSC 9075 / NRRL 31084 / PH-1) (Wheat head blight fungus).